A 397-amino-acid chain; its full sequence is Aspartate/prephenate aminotransferase (397 aa).

L-aspartate contacts are provided by Gly38, Trp124, and Asn174. Position 238 is an N6-(pyridoxal phosphate)lysine (Lys238). Arg375 is an L-aspartate binding site.

The protein belongs to the class-I pyridoxal-phosphate-dependent aminotransferase family. As to quaternary structure, homodimer. It depends on pyridoxal 5'-phosphate as a cofactor.

It localises to the cytoplasm. It catalyses the reaction L-aspartate + 2-oxoglutarate = oxaloacetate + L-glutamate. The enzyme catalyses L-arogenate + 2-oxoglutarate = prephenate + L-glutamate. Its function is as follows. Catalyzes the reversible conversion of aspartate and 2-oxoglutarate to glutamate and oxaloacetate. Can also transaminate prephenate in the presence of glutamate, with lower efficiency. This is Aspartate/prephenate aminotransferase from Nitrosomonas europaea (strain ATCC 19718 / CIP 103999 / KCTC 2705 / NBRC 14298).